A 167-amino-acid chain; its full sequence is T-cell surface glycoprotein CD3 delta chain (167 aa).

The N-terminal stretch at M1 to P21 is a signal peptide. Over R22–L100 the chain is Extracellular. C37 and C73 are joined by a disulfide. N38 and N55 each carry an N-linked (GlcNAc...) asparagine glycan. Residues A101–F121 traverse the membrane as a helical segment. Topologically, residues A122–K167 are cytoplasmic. The 29-residue stretch at D134 to K162 folds into the ITAM domain. Y145 and Y156 each carry phosphotyrosine.

In terms of assembly, the TCR-CD3 complex is composed of a CD3D/CD3E and a CD3G/CD3E heterodimers that preferentially associate with TCRalpha and TCRbeta, respectively, to form TCRalpha/CD3E/CD3G and TCRbeta/CD3G/CD3E trimers. In turn, the hexamer interacts with CD3Z homodimer to form the TCR-CD3 complex. Alternatively, TCRalpha and TCRbeta can be replaced by TCRgamma and TCRdelta. Interacts with coreceptors CD4 and CD8. Phosphorylated on Tyr residues after T-cell receptor triggering by LCK in association with CD4/CD8. CD3D is mostly present on T-lymphocytes with its TCR-CD3 partners. Present also in fetal NK-cells.

The protein localises to the cell membrane. Functionally, part of the TCR-CD3 complex present on T-lymphocyte cell surface that plays an essential role in adaptive immune response. When antigen presenting cells (APCs) activate T-cell receptor (TCR), TCR-mediated signals are transmitted across the cell membrane by the CD3 chains CD3D, CD3E, CD3G and CD3Z. All CD3 chains contain immunoreceptor tyrosine-based activation motifs (ITAMs) in their cytoplasmic domain. Upon TCR engagement, these motifs become phosphorylated by Src family protein tyrosine kinases LCK and FYN, resulting in the activation of downstream signaling pathways. In addition of this role of signal transduction in T-cell activation, CD3D plays an essential role in thymocyte differentiation. Indeed, participates in correct intracellular TCR-CD3 complex assembly and surface expression. In absence of a functional TCR-CD3 complex, thymocytes are unable to differentiate properly. Interacts with CD4 and CD8 and thus serves to establish a functional link between the TCR and coreceptors CD4 and CD8, which is needed for activation and positive selection of CD4 or CD8 T-cells. This is T-cell surface glycoprotein CD3 delta chain (CD3D) from Ovis aries (Sheep).